The following is a 148-amino-acid chain: SsrA-binding protein (148 aa).

The tract at residues 119-148 (AKGKKQHDKRQSMKEADWKREKQRLIKHTR) is disordered. Residues 127 to 142 (KRQSMKEADWKREKQR) show a composition bias toward basic and acidic residues.

It belongs to the SmpB family.

It is found in the cytoplasm. In terms of biological role, required for rescue of stalled ribosomes mediated by trans-translation. Binds to transfer-messenger RNA (tmRNA), required for stable association of tmRNA with ribosomes. tmRNA and SmpB together mimic tRNA shape, replacing the anticodon stem-loop with SmpB. tmRNA is encoded by the ssrA gene; the 2 termini fold to resemble tRNA(Ala) and it encodes a 'tag peptide', a short internal open reading frame. During trans-translation Ala-aminoacylated tmRNA acts like a tRNA, entering the A-site of stalled ribosomes, displacing the stalled mRNA. The ribosome then switches to translate the ORF on the tmRNA; the nascent peptide is terminated with the 'tag peptide' encoded by the tmRNA and targeted for degradation. The ribosome is freed to recommence translation, which seems to be the essential function of trans-translation. The protein is SsrA-binding protein of Neisseria gonorrhoeae (strain ATCC 700825 / FA 1090).